A 417-amino-acid polypeptide reads, in one-letter code: NADH-quinone oxidoreductase subunit D (417 aa).

The protein belongs to the complex I 49 kDa subunit family. As to quaternary structure, NDH-1 is composed of 14 different subunits. Subunits NuoB, C, D, E, F, and G constitute the peripheral sector of the complex.

It is found in the cell inner membrane. It carries out the reaction a quinone + NADH + 5 H(+)(in) = a quinol + NAD(+) + 4 H(+)(out). Functionally, NDH-1 shuttles electrons from NADH, via FMN and iron-sulfur (Fe-S) centers, to quinones in the respiratory chain. The immediate electron acceptor for the enzyme in this species is believed to be ubiquinone. Couples the redox reaction to proton translocation (for every two electrons transferred, four hydrogen ions are translocated across the cytoplasmic membrane), and thus conserves the redox energy in a proton gradient. This Leptothrix cholodnii (strain ATCC 51168 / LMG 8142 / SP-6) (Leptothrix discophora (strain SP-6)) protein is NADH-quinone oxidoreductase subunit D.